Consider the following 303-residue polypeptide: MAKVPPLIVICGTTASGKSQLALDLAQRLNAVILGADSRQIYKELDIGTAKPTLGDRQTVPHYLIDICEPTENFTLAEYQRQAQELIASLNQPILLVGGTGLYIQAIVKGLKIPAVPPQTNLREQLANLGQPFCYQLLSQVDPVAQSKIEPADVVRTLRALEVFYATGRPISSLQGENPPSYPIVQIGLGLEPEQLQPRIVHRTHAMVEAGLVKEVEGLINQYGEDLPLLHTLGYAEIKQYLQGQISLTQATESIIVHTRQFAKRQRTWFRKDSAIHWFDANQPNLLDSVTKLVQVDVNEGMF.

An ATP-binding site is contributed by G12–S19. Residue T14–S19 coordinates substrate. An interaction with substrate tRNA region spans residues D37–Q40.

It belongs to the IPP transferase family. As to quaternary structure, monomer. The cofactor is Mg(2+).

It catalyses the reaction adenosine(37) in tRNA + dimethylallyl diphosphate = N(6)-dimethylallyladenosine(37) in tRNA + diphosphate. Functionally, catalyzes the transfer of a dimethylallyl group onto the adenine at position 37 in tRNAs that read codons beginning with uridine, leading to the formation of N6-(dimethylallyl)adenosine (i(6)A). This is tRNA dimethylallyltransferase from Synechocystis sp. (strain ATCC 27184 / PCC 6803 / Kazusa).